A 1818-amino-acid chain; its full sequence is Nestin (1818 aa).

The tract at residues 1–14 (WREKLEAEVQRQNL) is coil 1B. The IF rod domain occupies 1 to 135 (WREKLEAEVQ…TLLEAENSRL (135 aa)). The segment at 15 to 17 (YQE) is linker 2. Positions 18-135 (RVAHMESSLG…TLLEAENSRL (118 aa)) are coil 2B. Phosphoserine is present on serine 133. The segment at 136-1818 (QTPGRSSQAS…DRDSWSSGED (1683 aa)) is tail. Residues threonine 137 and threonine 160 each carry the phosphothreonine modification. Serine 180 is subject to Phosphoserine. Threonine 210 is modified (phosphothreonine). Disordered regions lie at residues 266 to 309 (EEAG…GSSI), 336 to 355 (AQETQEDGLHTEEIQDSQGP), 377 to 451 (HETP…SPEG), and 480 to 787 (AFKK…EEDQ). At serine 288 the chain carries Phosphoserine. The segment covering 292–303 (PVLEAKDGDSTE) has biased composition (basic and acidic residues). Residues 382–398 (KENCNSLRSVDENQGTL) are compositionally biased toward polar residues. Phosphoserine occurs at positions 390 and 400. 2 stretches are compositionally biased toward basic and acidic residues: residues 400 to 427 (SPEEEKQTLLKSLEEKDVEVEKTLEKGV) and 434 to 443 (LGKEDPRIED). Serine 448 carries the phosphoserine modification. The span at 495 to 508 (EIQRVERLIEKEGQ) shows a compositional bias: basic and acidic residues. Serine 513 is modified (phosphoserine). Basic and acidic residues-rich tracts occupy residues 521–536 (TDRPLEKENGEPLKPV) and 565–586 (TDRPLEKEEDQLVERLVEKEGQ). Serine 591 is subject to Phosphoserine. 3 stretches are compositionally biased toward basic and acidic residues: residues 599–614 (TDRPLEKENGEPLKPV), 643–664 (TDRPLEKEEDQLVERLVEKEGQ), and 711–732 (TDRPLEKEEDQRVERLIEKEGQ). Serine 737 carries the post-translational modification Phosphoserine. Over residues 744–773 (ETYRLLEKENGEPLKPVEEEDQRVERLIEK) the composition is skewed to basic and acidic residues. Phosphoserine occurs at positions 803 and 824. A disordered region spans residues 866–900 (ESLLKKGTQESLESHEDRNQETQDPQRFLEEEGQG). The segment covering 868-886 (LLKKGTQESLESHEDRNQE) has biased composition (basic and acidic residues). Serine 915 and serine 957 each carry phosphoserine. A disordered region spans residues 945–998 (SLLERESQDSGKSLEGQEAFRCLGKEDPESLQFPEVQDQEIQRSLQQETQQTLG). The span at 986-997 (QRSLQQETQQTL) shows a compositional bias: polar residues. A Glycyl lysine isopeptide (Lys-Gly) (interchain with G-Cter in SUMO1); alternate cross-link involves residue lysine 1043. Residue lysine 1043 forms a Glycyl lysine isopeptide (Lys-Gly) (interchain with G-Cter in SUMO2); alternate linkage. Serine 1052, serine 1063, serine 1073, serine 1123, serine 1134, serine 1162, and serine 1238 each carry phosphoserine. Disordered regions lie at residues 1134 to 1262 (SPEA…LEGQ) and 1334 to 1818 (HPSL…SGED). Basic and acidic residues-rich tracts occupy residues 1342-1361 (VEAKIAHDLEGPGKEPKEAG) and 1401-1416 (ASDHEGSDAPEPRPSE). The segment covering 1490–1505 (QDWEESREESEADELG) has biased composition (acidic residues). Residues serine 1495, serine 1499, and serine 1523 each carry the phosphoserine modification. The span at 1570–1579 (LSSEEFEDLG) shows a compositional bias: acidic residues. A phosphoserine mark is found at serine 1614 and serine 1623. Acidic residues predominate over residues 1616-1636 (GFADEEESGEEGEEEEHEDGT). The span at 1686-1697 (GLETESQDSAEP) shows a compositional bias: polar residues. 5 positions are modified to phosphoserine: serine 1698, serine 1700, serine 1791, serine 1814, and serine 1815. Low complexity predominate over residues 1698–1708 (SGSEVSESVSS).

The protein belongs to the intermediate filament family. In terms of assembly, interacts with FHOD3. Forms homodimers and homotetramers in vitro. In mixtures with other intermediate filament proteins such as vimentin and alpha-internexin, preferentially forms heterodimers which can assemble to form intermediate filaments if nestin does not exceed 25%. In terms of processing, constitutively phosphorylated. This increases during mitosis when the cytoplasmic intermediate filament network is reorganized.

Functionally, required for brain and eye development. Promotes the disassembly of phosphorylated vimentin intermediate filaments (IF) during mitosis and may play a role in the trafficking and distribution of IF proteins and other cellular factors to daughter cells during progenitor cell division. Required for survival, renewal and mitogen-stimulated proliferation of neural progenitor cells. This Mesocricetus auratus (Golden hamster) protein is Nestin.